The sequence spans 415 residues: MAASTNRLRFLYSSARTVPQTGSITPISRRTYATTEPSPSATGAPATARKRTNFTDKLNAGPSFADFVSGGEDNAPLEPSEAYALKTAMVGPAGRKKEMTRLPSWLKTPIPDSKNYQRLKKDLRGLNLHTVCEEARCPNISDCWGGSDKSAATATIMLMGDTCTRGCRFCSVKTNRRPPPLDPHEPENTAEAISRWSLGYVVLTSVDRDDLADGGARHFAETVIKIKQKKPSMLVECLTGDYLGDLEMVKLVARSGLDVYAHNVETVEALTPFVRDRRATFQQSLRVLEAAKQARPDLITKTSLMLGFGETEEQLWDALRQLRSVGVDVVTFGQYMRPTKRHMPVHEYVTPDQFELWRQRALDMGFLYCASGPLVRSSYKAGEAFIENVLKKRRAAGTAGESVTDSKAAVDEATR.

The transit peptide at 1-32 (MAASTNRLRFLYSSARTVPQTGSITPISRRTY) directs the protein to the mitochondrion. Polar residues predominate over residues 22 to 32 (GSITPISRRTY). Residues 22–53 (GSITPISRRTYATTEPSPSATGAPATARKRTN) form a disordered region. The span at 33-47 (ATTEPSPSATGAPAT) shows a compositional bias: low complexity. [4Fe-4S] cluster is bound by residues Cys132, Cys137, Cys143, Cys163, Cys167, Cys170, and Ser378. In terms of domain architecture, Radical SAM core spans 146-367 (GSDKSAATAT…RQRALDMGFL (222 aa)). A disordered region spans residues 395 to 415 (AAGTAGESVTDSKAAVDEATR).

The protein belongs to the radical SAM superfamily. Lipoyl synthase family. [4Fe-4S] cluster is required as a cofactor.

Its subcellular location is the mitochondrion. It carries out the reaction [[Fe-S] cluster scaffold protein carrying a second [4Fe-4S](2+) cluster] + N(6)-octanoyl-L-lysyl-[protein] + 2 oxidized [2Fe-2S]-[ferredoxin] + 2 S-adenosyl-L-methionine + 4 H(+) = [[Fe-S] cluster scaffold protein] + N(6)-[(R)-dihydrolipoyl]-L-lysyl-[protein] + 4 Fe(3+) + 2 hydrogen sulfide + 2 5'-deoxyadenosine + 2 L-methionine + 2 reduced [2Fe-2S]-[ferredoxin]. Its pathway is protein modification; protein lipoylation via endogenous pathway; protein N(6)-(lipoyl)lysine from octanoyl-[acyl-carrier-protein]: step 2/2. Its function is as follows. Catalyzes the radical-mediated insertion of two sulfur atoms into the C-6 and C-8 positions of the octanoyl moiety bound to the lipoyl domains of lipoate-dependent enzymes, thereby converting the octanoylated domains into lipoylated derivatives. The polypeptide is Lipoyl synthase, mitochondrial (Aspergillus oryzae (strain ATCC 42149 / RIB 40) (Yellow koji mold)).